We begin with the raw amino-acid sequence, 129 residues long: Glycine cleavage system H protein (129 aa).

Residues 24-106 (IAVIGISAYA…YEQGWLLKVQ (83 aa)) form the Lipoyl-binding domain. Lys65 bears the N6-lipoyllysine mark.

Belongs to the GcvH family. As to quaternary structure, the glycine cleavage system is composed of four proteins: P, T, L and H. (R)-lipoate is required as a cofactor.

The glycine cleavage system catalyzes the degradation of glycine. The H protein shuttles the methylamine group of glycine from the P protein to the T protein. The sequence is that of Glycine cleavage system H protein from Synechococcus elongatus (strain ATCC 33912 / PCC 7942 / FACHB-805) (Anacystis nidulans R2).